The primary structure comprises 211 residues: Large ribosomal subunit protein eL13 (211 aa).

This sequence belongs to the eukaryotic ribosomal protein eL13 family. As to quaternary structure, component of the 60S large ribosomal subunit (LSU).

The protein localises to the cytoplasm. Its function is as follows. Component of the ribosome, a large ribonucleoprotein complex responsible for the synthesis of proteins in the cell. The small ribosomal subunit (SSU) binds messenger RNAs (mRNAs) and translates the encoded message by selecting cognate aminoacyl-transfer RNA (tRNA) molecules. The large subunit (LSU) contains the ribosomal catalytic site termed the peptidyl transferase center (PTC), which catalyzes the formation of peptide bonds, thereby polymerizing the amino acids delivered by tRNAs into a polypeptide chain. The nascent polypeptides leave the ribosome through a tunnel in the LSU and interact with protein factors that function in enzymatic processing, targeting, and the membrane insertion of nascent chains at the exit of the ribosomal tunnel. As part of the LSU, it is probably required for its formation and the maturation of rRNAs. This chain is Large ribosomal subunit protein eL13 (RPL13), found in Gallus gallus (Chicken).